Consider the following 435-residue polypeptide: Plant UBX domain-containing protein 6 (435 aa).

Disordered regions lie at residues 1 to 150 (MDVN…PQKV), 208 to 265 (ENYT…EDQP), and 311 to 352 (PTTT…SMSS). The segment covering 49 to 62 (TSSFSTFDGSSGYS) has biased composition (low complexity). The segment covering 112-129 (AVEHYGGEENRAIERPEQ) has biased composition (basic and acidic residues). A compositionally biased stretch (low complexity) spans 130–141 (SSRSMSEETVSS). One can recognise an SEP 1 domain in the interval 150-211 (VFTHTVTSWS…IISREEENYT (62 aa)). Residues 211–222 (TESQAGSDSAST) are compositionally biased toward polar residues. Basic and acidic residues predominate over residues 231–242 (RAKESAIERSEQ). The span at 252 to 265 (DSAELQEQQQEDQP) shows a compositional bias: acidic residues. The region spanning 268 to 343 (VVTYTVTIWR…ESTSTEPPLT (76 aa)) is the SEP 2 domain. 2 stretches are compositionally biased toward low complexity: residues 312 to 323 (TTTRSTSCSSQT) and 333 to 349 (SESTSTEPPLTTTQPPS). Residues 357-434 (PAAPTTSIQL…GIANSVLVQK (78 aa)) form the UBX domain.

The protein is Plant UBX domain-containing protein 6 of Arabidopsis thaliana (Mouse-ear cress).